A 419-amino-acid polypeptide reads, in one-letter code: Aminoacyltransferase FemB (419 aa).

The protein belongs to the FemABX family. Homodimer. Interacts with FemA.

The protein resides in the cytoplasm. It catalyses the reaction MurNAc-L-Ala-D-isoglutaminyl-L-Lys-(N(6)-tri-Gly)-D-Ala-D-Ala-diphospho-di-trans,octa-cis-undecaprenyl-GlcNAc + 2 glycyl-tRNA(Gly) = MurNAc-L-Ala-D-isoglutaminyl-L-Lys-(N(6)-penta-Gly)-D-Ala-D-Ala-diphospho-di-trans,octa-cis-undecaprenyl-GlcNAc + 2 tRNA(Gly) + 2 H(+). Functionally, catalyzes the formation of the pentaglycine interpeptide bridge, which is characteristic of the S.aureus peptidoglycan. Adds glycines 4 and 5 of the pentaglycine bridge, using glycyl-tRNA(Gly) as donor. The protein is Aminoacyltransferase FemB (femB) of Staphylococcus aureus (strain bovine RF122 / ET3-1).